A 296-amino-acid polypeptide reads, in one-letter code: Putative mannose 6-phosphate receptor-like protein C530.09c (296 aa).

Positions Met1–Gly25 are cleaved as a signal peptide. The Lumenal portion of the chain corresponds to Leu26–Pro206. An MRH domain is found at Pro42–Thr197. A disulfide bridge links Cys44 with Cys87. N-linked (GlcNAc...) asparagine glycans are attached at residues Asn64, Asn81, Asn93, Asn96, and Asn143. Intrachain disulfides connect Cys147-Cys183 and Cys163-Cys195. The chain crosses the membrane as a helical span at residues Val207–Val227. The Cytoplasmic portion of the chain corresponds to Tyr228 to Ser249. A helical transmembrane segment spans residues Leu250–Pro270. Over Ser271 to Thr296 the chain is Lumenal.

Belongs to the MRL1/IGF2R family.

The protein localises to the golgi apparatus. It is found in the trans-Golgi network membrane. The protein resides in the endosome membrane. In Schizosaccharomyces pombe (strain 972 / ATCC 24843) (Fission yeast), this protein is Putative mannose 6-phosphate receptor-like protein C530.09c.